Here is a 155-residue protein sequence, read N- to C-terminus: Basic phospholipase A2 PC1 (155 aa).

An N-terminal signal peptide occupies residues 1–21; that stretch reads MYPAHLLVLLAVCVSLLGASA. Positions 22–27 are excised as a propeptide; it reads ISNRPR. Intrachain disulfides connect Cys38–Cys98, Cys54–Cys144, Cys56–Cys72, Cys71–Cys125, Cys78–Cys118, Cys87–Cys111, and Cys105–Cys116. Residues Tyr55, Gly57, and Gly59 each contribute to the Ca(2+) site. Residue His75 is part of the active site. Asp76 lines the Ca(2+) pocket. Residue Asp119 is part of the active site.

The protein belongs to the phospholipase A2 family. Group I subfamily. D49 sub-subfamily. Requires Ca(2+) as cofactor. In terms of tissue distribution, expressed by the venom gland.

Its subcellular location is the secreted. It catalyses the reaction a 1,2-diacyl-sn-glycero-3-phosphocholine + H2O = a 1-acyl-sn-glycero-3-phosphocholine + a fatty acid + H(+). Snake venom phospholipase A2 (PLA2) that inhibits neuromuscular transmission by blocking acetylcholine release from the nerve termini. PLA2 catalyzes the calcium-dependent hydrolysis of the 2-acyl groups in 3-sn-phosphoglycerides. In Laticauda colubrina (Yellow-lipped sea krait), this protein is Basic phospholipase A2 PC1.